Consider the following 171-residue polypeptide: Endoribonuclease YbeY (171 aa).

Zn(2+) is bound by residues His126, His130, and His136.

The protein belongs to the endoribonuclease YbeY family. It depends on Zn(2+) as a cofactor.

The protein resides in the cytoplasm. Single strand-specific metallo-endoribonuclease involved in late-stage 70S ribosome quality control and in maturation of the 3' terminus of the 16S rRNA. This chain is Endoribonuclease YbeY, found in Rhizobium johnstonii (strain DSM 114642 / LMG 32736 / 3841) (Rhizobium leguminosarum bv. viciae).